The following is a 217-amino-acid chain: ATP-binding protein BexA (217 aa).

Positions 2–217 constitute an ABC transporter domain; sequence IRVNNVCKKY…AYQYYNETQK (216 aa). 38–45 serves as a coordination point for ATP; it reads GRNGAGKS.

It belongs to the ABC transporter superfamily.

The protein resides in the cell inner membrane. In terms of biological role, putative ATP-binding protein, and an energy-coupling component of capsule polysaccharide export apparatus. In Haemophilus influenzae, this protein is ATP-binding protein BexA (bexA).